The primary structure comprises 1149 residues: ATP-dependent helicase/deoxyribonuclease subunit B (1149 aa).

8–15 contacts ATP; sequence GRAGSGKS. The [4Fe-4S] cluster site is built by Cys-788, Cys-1106, Cys-1109, and Cys-1115.

It belongs to the helicase family. AddB/RexB type 1 subfamily. As to quaternary structure, heterodimer of AddA and AddB. Mg(2+) is required as a cofactor. The cofactor is [4Fe-4S] cluster.

Functionally, the heterodimer acts as both an ATP-dependent DNA helicase and an ATP-dependent, dual-direction single-stranded exonuclease. Recognizes the chi site generating a DNA molecule suitable for the initiation of homologous recombination. The AddB subunit has 5' -&gt; 3' nuclease activity but not helicase activity. The polypeptide is ATP-dependent helicase/deoxyribonuclease subunit B (Ruminiclostridium cellulolyticum (strain ATCC 35319 / DSM 5812 / JCM 6584 / H10) (Clostridium cellulolyticum)).